A 369-amino-acid polypeptide reads, in one-letter code: Coproporphyrin III ferrochelatase (369 aa).

The Fe-coproporphyrin III site is built by Ser61 and Tyr130. Fe(2+)-binding residues include His197 and Glu286.

The protein belongs to the ferrochelatase family.

Its subcellular location is the cytoplasm. The enzyme catalyses Fe-coproporphyrin III + 2 H(+) = coproporphyrin III + Fe(2+). It functions in the pathway porphyrin-containing compound metabolism; protoheme biosynthesis. Functionally, involved in coproporphyrin-dependent heme b biosynthesis. Catalyzes the insertion of ferrous iron into coproporphyrin III to form Fe-coproporphyrin III. This is Coproporphyrin III ferrochelatase from Corynebacterium diphtheriae (strain ATCC 700971 / NCTC 13129 / Biotype gravis).